Here is a 545-residue protein sequence, read N- to C-terminus: MATIPLFFSLILFLRLYHASRLEKRKEVEGEGIVAAEDLVSENDNPQGDDEVLPVHFIDQAAIVRTSIINYTFRYNEVLDAAKLHRGLLQLLKIPGWNKLGGRLRATKNGKLEIHVPRSFSKTRPEVKFSHVDCSDTEIESHGLASQLPRPTGSTPSIQEGCHAFRSFALPTDLPNNIEHYWKNDQPMLSLHITSFANGTLVGLTFPHSLTDAMGTSEFLKAWSNVVAGKSSFVKPLQGTQVDVLGDVGTNLDKKASQGEFFLEDQQTRGFSLLSFIARYMWDVKTRRSIRTKHIYLPAKYMSHLRQGVEEELKRQNGGVVPFVSDGDLITAWGARMVMSSSTWKNCSAVICNVFDLRGRLKGTFARGGTYLQNLILPATTVLSKEEAATATTAQIALGLRKAIVEQTDDVQSRRLMRIARRWFSSMGSMPLFAKWDSRVVACTNWTKAKFLDAADFGPNALIAGGAGNQKSSSTRKAARHTEPTQAQTQPGRPVMYWGTTLSVTDNPRDTFVIYGKDKVGNYWVHAYLREETWSLIQKELDSFR.

Positions 1-19 (MATIPLFFSLILFLRLYHA) are cleaved as a signal peptide. 2 N-linked (GlcNAc...) asparagine glycosylation sites follow: Asn70 and Asn198. Residue His208 is the Proton acceptor of the active site. N-linked (GlcNAc...) asparagine glycosylation is found at Asn346 and Asn445. A disordered region spans residues 466–493 (GAGNQKSSSTRKAARHTEPTQAQTQPGR).

Belongs to the plant acyltransferase family.

The protein operates within secondary metabolite biosynthesis. In terms of biological role, acetyltransferase; part of the gene cluster that mediates the biosynthesis of botrydial. Botrydial is necessary for colonization of plant tissue by the T4 strain. It is a strain-dependent virulence factor since highly aggressive strains like SAS56 or B05 still retain substantial virulence when botrydial synthesis is impaired, since they produce also botcinic acid. The first step of botrydial biosynthesis is performed by the sesquiterpene synthase BOT2 which catalyzes the cyclization of farnesyl diphosphate (FPP) to presilphiperfolan-8-beta-ol (PSP). The cytochrome P450 monooxygenase BOT4 then catalyzes the hydroxylation at C-4 to give a probotryane intermediate. Acetylation of the hydroxyl at C-4 is carried out by the acetyltransferase BOT5, followed by the combined action of the P450 monooxygenases BOT3 and BOT1, to yield finally the glycol, via the regio- and stereospecific hydroxylations at C-10 and C-15 of the probotryane intermediates, respectively. The cleavage of the C10-C15 bond of probotryane skeleton is an intriguing and chemically important reaction, which could be mediated by some of the monooxygenases or by a combination of them. It is possible that either BOT3 or BOT1 would oxidize either the 10- or the 15-hydroxy group to the hydroperoxide derivative, which would then undergo heterolytic fragmentation to give the dialdehyde botrydial. Finally, the dehydrogenase BOT7 might be involved in the conversion of botrydial to dihydrobotrydial. This chain is Acetyltransferase BOT5, found in Botryotinia fuckeliana (Noble rot fungus).